Consider the following 83-residue polypeptide: Conotoxin Im22.1 (83 aa).

A signal peptide spans 1 to 18 (MMMRVFIAMFFLLALVEA). The propeptide occupies 19–26 (GWPRLYDK).

The protein belongs to the conotoxin E superfamily. Post-translationally, contain 4 disulfide bonds. Expressed by the venom duct.

It is found in the secreted. Probable neurotoxin. This chain is Conotoxin Im22.1, found in Conus imperialis (Imperial cone).